The chain runs to 147 residues: Histidine-containing phosphotransfer protein 1 (147 aa).

In terms of domain architecture, HPt spans 38–133 (APDFVSEVVT…YDLRNKFQAM (96 aa)). H79 is subject to Phosphohistidine.

Post-translationally, two-component system major event consists of a His-to-Asp phosphorelay between a sensor histidine kinase (HK) and a response regulator (RR). In plants, the His-to-Asp phosphorelay involves an additional intermediate named Histidine-containing phosphotransfer protein (HPt). This multistep phosphorelay consists of a His-Asp-His-Asp sequential transfer of a phosphate group between first a His and an Asp of the HK protein, followed by the transfer to a conserved His of the HPt protein and finally the transfer to an Asp in the receiver domain of the RR protein. In terms of tissue distribution, widely expressed.

It is found in the cytoplasm. Its subcellular location is the cytosol. The protein resides in the nucleus. In terms of biological role, functions as a two-component phosphorelay mediators between cytokinin sensor histidine kinases and response regulators (B-type ARRs). Plays an important role in propagating cytokinin signal transduction through the multistep His-to-Asp phosphorelay. Functions as a positive regulator of the cytokinin signaling pathway. May play a regulatory role in salt and drought tolerance during plant development. The polypeptide is Histidine-containing phosphotransfer protein 1 (Oryza sativa subsp. japonica (Rice)).